The sequence spans 132 residues: Transcriptional regulator MraZ (132 aa).

SpoVT-AbrB domains lie at 5–47 and 76–119; these read TYEH…SKDD and TVEI…SKNK.

The protein belongs to the MraZ family. Forms oligomers.

The protein localises to the cytoplasm. It localises to the nucleoid. The sequence is that of Transcriptional regulator MraZ from Mycoplasma capricolum subsp. capricolum (strain California kid / ATCC 27343 / NCTC 10154).